The chain runs to 423 residues: tRNA(Ile)-lysidine synthase (423 aa).

27–32 lines the ATP pocket; the sequence is SGGVDS.

Belongs to the tRNA(Ile)-lysidine synthase family.

It localises to the cytoplasm. It catalyses the reaction cytidine(34) in tRNA(Ile2) + L-lysine + ATP = lysidine(34) in tRNA(Ile2) + AMP + diphosphate + H(+). Its function is as follows. Ligates lysine onto the cytidine present at position 34 of the AUA codon-specific tRNA(Ile) that contains the anticodon CAU, in an ATP-dependent manner. Cytidine is converted to lysidine, thus changing the amino acid specificity of the tRNA from methionine to isoleucine. The protein is tRNA(Ile)-lysidine synthase of Streptococcus mutans serotype c (strain ATCC 700610 / UA159).